The sequence spans 561 residues: TBC1 domain family member 24 (561 aa).

A 1,2-diacyl-sn-glycero-3-phospho-(1D-myo-inositol) is bound by residues lysine 36 and arginine 40. Residues 45–236 form the Rab-GAP TBC domain; it reads AQSHTLRGKV…RVFDVFLVEG (192 aa). A 1,2-diacyl-sn-glycero-3-phospho-(1D-myo-inositol) is bound by residues lysine 238, arginine 242, and 293-297; that span reads RLFSR. Positions 343 to 556 constitute a TLDc domain; it reads EIVSVKEMRD…IAAVEAWGFQ (214 aa). Residues serine 475 and serine 482 each carry the phosphoserine modification.

Interacts with ARF6. Expressed in brain, particularly at the level of the cortex and the hippocampus. Expressed in the inner ear in spiral ganglion cells, a collection of neurons critical for hearing and balance.

Its subcellular location is the cell membrane. It localises to the cytoplasm. It is found in the cytoplasmic vesicle membrane. The protein resides in the presynapse. Functionally, may act as a GTPase-activating protein for Rab family protein(s). Involved in neuronal projections development, probably through a negative modulation of ARF6 function. Involved in the regulation of synaptic vesicle trafficking. This is TBC1 domain family member 24 (Tbc1d24) from Mus musculus (Mouse).